A 121-amino-acid polypeptide reads, in one-letter code: Group 1 truncated hemoglobin (121 aa).

Residue Met-1 is modified to N-acetylmethionine. His-73 is a binding site for heme.

Belongs to the truncated hemoglobin family. Group I subfamily. Monomer. Heme is required as a cofactor.

This Tetrahymena pyriformis protein is Group 1 truncated hemoglobin.